The sequence spans 271 residues: Acetyl-coenzyme A carboxylase carboxyl transferase subunit beta (271 aa).

One can recognise a CoA carboxyltransferase N-terminal domain in the interval 21–271 (LWIQCPYCKQ…LGDLLALHTA (251 aa)). Zn(2+) contacts are provided by C25, C28, C43, and C46. The segment at 25–46 (CPYCKQGSYRESLGNAQVCPHC) adopts a C4-type zinc-finger fold.

This sequence belongs to the AccD/PCCB family. In terms of assembly, acetyl-CoA carboxylase is a heterohexamer composed of biotin carboxyl carrier protein (AccB), biotin carboxylase (AccC) and two subunits each of ACCase subunit alpha (AccA) and ACCase subunit beta (AccD). Requires Zn(2+) as cofactor.

The protein localises to the cytoplasm. It catalyses the reaction N(6)-carboxybiotinyl-L-lysyl-[protein] + acetyl-CoA = N(6)-biotinyl-L-lysyl-[protein] + malonyl-CoA. It functions in the pathway lipid metabolism; malonyl-CoA biosynthesis; malonyl-CoA from acetyl-CoA: step 1/1. Component of the acetyl coenzyme A carboxylase (ACC) complex. Biotin carboxylase (BC) catalyzes the carboxylation of biotin on its carrier protein (BCCP) and then the CO(2) group is transferred by the transcarboxylase to acetyl-CoA to form malonyl-CoA. This chain is Acetyl-coenzyme A carboxylase carboxyl transferase subunit beta, found in Lacticaseibacillus casei (strain BL23) (Lactobacillus casei).